The primary structure comprises 189 residues: Peptidyl-tRNA hydrolase (189 aa).

Position 14 (Y14) interacts with tRNA. The active-site Proton acceptor is the H19. TRNA is bound by residues Y64, N66, and N112.

It belongs to the PTH family. Monomer.

The protein resides in the cytoplasm. It carries out the reaction an N-acyl-L-alpha-aminoacyl-tRNA + H2O = an N-acyl-L-amino acid + a tRNA + H(+). Hydrolyzes ribosome-free peptidyl-tRNAs (with 1 or more amino acids incorporated), which drop off the ribosome during protein synthesis, or as a result of ribosome stalling. Its function is as follows. Catalyzes the release of premature peptidyl moieties from peptidyl-tRNA molecules trapped in stalled 50S ribosomal subunits, and thus maintains levels of free tRNAs and 50S ribosomes. The sequence is that of Peptidyl-tRNA hydrolase from Clostridium botulinum (strain ATCC 19397 / Type A).